A 95-amino-acid polypeptide reads, in one-letter code: Small ribosomal subunit protein bS18 (95 aa).

It belongs to the bacterial ribosomal protein bS18 family. In terms of assembly, part of the 30S ribosomal subunit. Forms a tight heterodimer with protein bS6.

In terms of biological role, binds as a heterodimer with protein bS6 to the central domain of the 16S rRNA, where it helps stabilize the platform of the 30S subunit. This is Small ribosomal subunit protein bS18 from Ehrlichia ruminantium (strain Gardel).